Here is a 227-residue protein sequence, read N- to C-terminus: Superoxide dismutase [Cu-Zn] (227 aa).

The signal sequence occupies residues 1-19 (MPKLLPPVVLAGCVVALGA). Cysteine 20 carries the N-palmitoyl cysteine lipid modification. A lipid anchor (S-diacylglycerol cysteine) is attached at cysteine 20. The tract at residues 23-55 (PQHASSLPGTTPAVWTGSPSPSGAGAAEAAPAA) is disordered. Residues 39 to 55 (GSPSPSGAGAAEAAPAA) are compositionally biased toward low complexity. Cu cation-binding residues include histidine 103 and histidine 105. The cysteines at positions 110 and 221 are disulfide-linked. A Zn(2+)-binding site is contributed by aspartate 145. Residue histidine 182 participates in Cu cation binding.

This sequence belongs to the Cu-Zn superoxide dismutase family. The cofactor is Cu cation. Zn(2+) is required as a cofactor.

The protein resides in the cell membrane. The catalysed reaction is 2 superoxide + 2 H(+) = H2O2 + O2. Functionally, destroys radicals which are normally produced within the cells and which are toxic to biological systems. May play a role in favoring mycobacterial survival in phagocytes. This chain is Superoxide dismutase [Cu-Zn] (sodC), found in Mycolicibacterium paratuberculosis (strain ATCC BAA-968 / K-10) (Mycobacterium paratuberculosis).